Here is a 278-residue protein sequence, read N- to C-terminus: Glutamate racemase (278 aa).

Substrate-binding positions include 13–14 (DS) and 45–46 (YG). Catalysis depends on C76, which acts as the Proton donor/acceptor. Position 77–78 (77–78 (NT)) interacts with substrate. C185 acts as the Proton donor/acceptor in catalysis. 186-187 (TH) serves as a coordination point for substrate.

This sequence belongs to the aspartate/glutamate racemases family.

It carries out the reaction L-glutamate = D-glutamate. Its pathway is cell wall biogenesis; peptidoglycan biosynthesis. In terms of biological role, provides the (R)-glutamate required for cell wall biosynthesis. This Gloeothece citriformis (strain PCC 7424) (Cyanothece sp. (strain PCC 7424)) protein is Glutamate racemase.